A 492-amino-acid polypeptide reads, in one-letter code: Catalase isozyme A (492 aa).

Residues 1–23 are disordered; that stretch reads MDPCKFRPSSSFDTKTTTTNAGA. The segment covering 8-21 has biased composition (polar residues); the sequence is PSSSFDTKTTTTNA. Active-site residues include histidine 65 and asparagine 138. Tyrosine 348 contacts heme.

This sequence belongs to the catalase family. In terms of assembly, homotetramer. Heme serves as cofactor.

The protein resides in the peroxisome. Its subcellular location is the glyoxysome. The enzyme catalyses 2 H2O2 = O2 + 2 H2O. Its function is as follows. Occurs in almost all aerobically respiring organisms and serves to protect cells from the toxic effects of hydrogen peroxide. The sequence is that of Catalase isozyme A from Oryza sativa subsp. indica (Rice).